The primary structure comprises 278 residues: Probable F-box protein At1g14315 (278 aa).

The region spanning 1–43 is the F-box domain; it reads MQLLPHDTVEDILERVPVKSLLRFKSACKQWKLTIESQYFQAK.

This Arabidopsis thaliana (Mouse-ear cress) protein is Probable F-box protein At1g14315.